The chain runs to 1755 residues: Transposon Ty1-MR1 Gag-Pol polyprotein (1755 aa).

Polar residues-rich tracts occupy residues M1–D31, V46–S60, and V137–H168. Disordered regions lie at residues M1–Q88, V137–I174, and Q350–S420. The segment at N299–H401 is RNA-binding. The span at S363–R372 shows a compositional bias: basic and acidic residues. Residues T373–G411 show a composition bias toward polar residues. The active-site For protease activity; shared with dimeric partner is the D461. Positions N583–C640 are integrase-type zinc finger-like. One can recognise an Integrase catalytic domain in the interval N660–P835. Mg(2+) contacts are provided by D671 and D736. The interval A958–Y1172 is disordered. Low complexity predominate over residues S960 to T969. Residues S1005–T1015 are compositionally biased toward polar residues. Over residues E1038 to S1053 the composition is skewed to basic and acidic residues. 2 stretches are compositionally biased toward polar residues: residues Y1054 to E1082 and S1095 to L1106. Residues K1178–R1212 carry the Bipartite nuclear localization signal motif. In terms of domain architecture, Reverse transcriptase Ty1/copia-type spans N1338 to Q1476. Mg(2+) contacts are provided by D1346, D1427, D1428, D1610, E1652, and D1685. Positions D1610–K1752 constitute an RNase H Ty1/copia-type domain.

The capsid protein forms a homotrimer, from which the VLPs are assembled. The protease is a homodimer, whose active site consists of two apposed aspartic acid residues. Post-translationally, initially, virus-like particles (VLPs) are composed of the structural unprocessed proteins Gag and Gag-Pol, and also contain the host initiator methionine tRNA (tRNA(i)-Met) which serves as a primer for minus-strand DNA synthesis, and a dimer of genomic Ty RNA. Processing of the polyproteins occurs within the particle and proceeds by an ordered pathway, called maturation. First, the protease (PR) is released by autocatalytic cleavage of the Gag-Pol polyprotein yielding capsid protein p45 and a Pol-p154 precursor protein. This cleavage is a prerequisite for subsequent processing of Pol-p154 at the remaining sites to release the mature structural and catalytic proteins. Maturation takes place prior to the RT reaction and is required to produce transposition-competent VLPs.

The protein resides in the cytoplasm. The protein localises to the nucleus. It catalyses the reaction DNA(n) + a 2'-deoxyribonucleoside 5'-triphosphate = DNA(n+1) + diphosphate. The catalysed reaction is Endonucleolytic cleavage to 5'-phosphomonoester.. Its function is as follows. Capsid protein (CA) is the structural component of the virus-like particle (VLP), forming the shell that encapsulates the retrotransposons dimeric RNA genome. The particles are assembled from trimer-clustered units and there are holes in the capsid shells that allow for the diffusion of macromolecules. CA also has nucleocapsid-like chaperone activity, promoting primer tRNA(i)-Met annealing to the multipartite primer-binding site (PBS), dimerization of Ty1 RNA and initiation of reverse transcription. The aspartyl protease (PR) mediates the proteolytic cleavages of the Gag and Gag-Pol polyproteins after assembly of the VLP. In terms of biological role, reverse transcriptase/ribonuclease H (RT) is a multifunctional enzyme that catalyzes the conversion of the retro-elements RNA genome into dsDNA within the VLP. The enzyme displays a DNA polymerase activity that can copy either DNA or RNA templates, and a ribonuclease H (RNase H) activity that cleaves the RNA strand of RNA-DNA heteroduplexes during plus-strand synthesis and hydrolyzes RNA primers. The conversion leads to a linear dsDNA copy of the retrotransposon that includes long terminal repeats (LTRs) at both ends. Functionally, integrase (IN) targets the VLP to the nucleus, where a subparticle preintegration complex (PIC) containing at least integrase and the newly synthesized dsDNA copy of the retrotransposon must transit the nuclear membrane. Once in the nucleus, integrase performs the integration of the dsDNA into the host genome. This is Transposon Ty1-MR1 Gag-Pol polyprotein (TY1B-MR1) from Saccharomyces cerevisiae (strain ATCC 204508 / S288c) (Baker's yeast).